A 154-amino-acid polypeptide reads, in one-letter code: NADPH-dependent 7-cyano-7-deazaguanine reductase (154 aa).

Polar residues predominate over residues 1 to 13 (MSVTDVSGLSQLG). Residues 1-30 (MSVTDVSGLSQLGTKVDTPESPEKAVLEKV) are disordered. Basic and acidic residues predominate over residues 17 to 27 (DTPESPEKAVL). Catalysis depends on C52, which acts as the Thioimide intermediate. D59 serves as the catalytic Proton donor. Substrate contacts are provided by residues 74-76 (VES) and 93-94 (HE).

This sequence belongs to the GTP cyclohydrolase I family. QueF type 1 subfamily.

Its subcellular location is the cytoplasm. The catalysed reaction is 7-aminomethyl-7-carbaguanine + 2 NADP(+) = 7-cyano-7-deazaguanine + 2 NADPH + 3 H(+). The protein operates within tRNA modification; tRNA-queuosine biosynthesis. Its function is as follows. Catalyzes the NADPH-dependent reduction of 7-cyano-7-deazaguanine (preQ0) to 7-aminomethyl-7-deazaguanine (preQ1). In Agrobacterium fabrum (strain C58 / ATCC 33970) (Agrobacterium tumefaciens (strain C58)), this protein is NADPH-dependent 7-cyano-7-deazaguanine reductase.